The primary structure comprises 417 residues: Phosphoglycerate kinase 1 (417 aa).

The residue at position 2 (Ser2) is an N-acetylserine. Phosphoserine is present on residues Ser2 and Ser4. Lys6 is subject to N6-succinyllysine. Lys11 bears the N6-acetyllysine mark. Positions 23, 24, 25, 26, 38, and 39 each coordinate (2R)-3-phosphoglycerate. The interval 38-43 is mitochondrial targeting region exposed following cis-trans isomerization by PIN1 and recognized by the TOM complex for mitochondrial translocation of the protein; sequence QRIKAA. An N6-acetyllysine; alternate modification is found at Lys48. Residue Lys48 is modified to N6-succinyllysine; alternate. (2R)-3-phosphoglycerate is bound by residues Ser62, His63, Gly65, and Arg66. An N6-acetyllysine modification is found at Lys75. Tyr76 is modified (phosphotyrosine). Residues Lys86 and Lys91 each carry the N6-acetyllysine modification. Lys97 is subject to N6-acetyllysine; alternate. At Lys97 the chain carries N6-(2-hydroxyisobutyryl)lysine; alternate. (2R)-3-phosphoglycerate-binding residues include Leu122 and Arg123. N6-acetyllysine; alternate is present on Lys131. N6-malonyllysine; alternate is present on Lys131. Lys146 bears the N6-acetyllysine mark. (2R)-3-phosphoglycerate contacts are provided by His170 and Arg171. N6-succinyllysine is present on Lys191. The residue at position 196 (Tyr196) is a Phosphotyrosine. Lys199 bears the N6-acetyllysine mark. Ser203 carries the phosphoserine modification. Position 214 (Gly214) interacts with ADP. A CDP-binding site is contributed by Gly214. Positions 215 and 216 each coordinate AMP. Ala215 contributes to the ATP binding site. Ala215 serves as a coordination point for Mg(2+). Lys216 carries the N6-(2-hydroxyisobutyryl)lysine modification. Positions 218 and 219 each coordinate Mg(2+). Position 219 (Asp219) interacts with CDP. Position 220 (Lys220) interacts with AMP. ATP is bound at residue Lys220. Lys220 carries the N6-(2-hydroxyisobutyryl)lysine modification. Gly238 contributes to the ADP binding site. A CDP-binding site is contributed by Gly238. Residue Gly239 participates in AMP binding. Gly239 is a binding site for ATP. 2 positions are modified to N6-acetyllysine: Lys267 and Lys291. Gly313 contributes to the AMP binding site. Residue Gly313 participates in ATP binding. Residue Lys323 is modified to N6-(2-hydroxyisobutyryl)lysine. Gly338, Val340, and Phe343 together coordinate CDP. Phe343 provides a ligand contact to ADP. Glu344 contributes to the AMP binding site. Glu344 provides a ligand contact to ATP. Lys361 bears the N6-acetyllysine mark. ATP is bound by residues Asp375 and Thr376. A Mg(2+)-binding site is contributed by Asp375.

The protein belongs to the phosphoglycerate kinase family. In terms of assembly, monomer. Interacts with kinase MAPK1/ERK2; the interaction is direct, occurs under hypoxic conditions, and promotes its interaction with PIN1. Interacts with peptidyl-prolyl cis-trans isomerase PIN1; the interaction is direct, occurs under hypoxic conditions, and targets the protein to the mitochondrion by promoting interactions with the TOM complex. Interacts with mitochondrial circRNA mcPGK1 (via its 2nd stem-loop); the interaction is direct and targets the protein to the mitochondrion by promoting interactions with the TOM complex. Interacts with pyruvate dehydrogenase kinase PDK1; the interaction is direct, occurs under hypoxic conditions and leads to PDK1-mediated inhibition of pyruvate dehydrogenase complex activity. The cofactor is Mg(2+). Post-translationally, phosphorylated at Ser-203 by MAPK1/ERK2 under hypoxic conditions, which promotes its mitochondrial targeting. As to expression, testis, lung, brain, skeletal muscle, liver, intestine, and kidney (at protein level).

The protein resides in the cytoplasm. Its subcellular location is the cytosol. The protein localises to the mitochondrion matrix. It carries out the reaction (2R)-3-phosphoglycerate + ATP = (2R)-3-phospho-glyceroyl phosphate + ADP. The catalysed reaction is L-seryl-[protein] + ATP = O-phospho-L-seryl-[protein] + ADP + H(+). Its pathway is carbohydrate degradation; glycolysis; pyruvate from D-glyceraldehyde 3-phosphate: step 2/5. In terms of biological role, catalyzes one of the two ATP producing reactions in the glycolytic pathway via the reversible conversion of 1,3-diphosphoglycerate to 3-phosphoglycerate. Both L- and D- forms of purine and pyrimidine nucleotides can be used as substrates, but the activity is much lower on pyrimidines. In addition to its role as a glycolytic enzyme, it seems that PGK-1 acts as a polymerase alpha cofactor protein (primer recognition protein). Acts as a protein kinase when localized to the mitochondrion where it phosphorylates pyruvate dehydrogenase kinase PDK1 to inhibit pyruvate dehydrogenase complex activity and suppress the formation of acetyl-coenzyme A from pyruvate, and consequently inhibit oxidative phosphorylation and promote glycolysis. May play a role in sperm motility. In Mus musculus (Mouse), this protein is Phosphoglycerate kinase 1 (Pgk1).